Reading from the N-terminus, the 460-residue chain is tRNA(Ile)-lysidine synthase (460 aa).

30-35 contacts ATP; that stretch reads SGGLDS.

It belongs to the tRNA(Ile)-lysidine synthase family.

It localises to the cytoplasm. It carries out the reaction cytidine(34) in tRNA(Ile2) + L-lysine + ATP = lysidine(34) in tRNA(Ile2) + AMP + diphosphate + H(+). Its function is as follows. Ligates lysine onto the cytidine present at position 34 of the AUA codon-specific tRNA(Ile) that contains the anticodon CAU, in an ATP-dependent manner. Cytidine is converted to lysidine, thus changing the amino acid specificity of the tRNA from methionine to isoleucine. The sequence is that of tRNA(Ile)-lysidine synthase from Yersinia pseudotuberculosis serotype I (strain IP32953).